We begin with the raw amino-acid sequence, 226 residues long: Adenylate kinase (226 aa).

12 to 17 (GSGKGT) is an ATP binding site. Residues 32–61 (ESGAIFREHIGGGTELGLKAKEYIERGDLV) are NMP. AMP-binding positions include S33, R38, 59–61 (DLV), 87–90 (GFPR), and Q94. Residues 128 to 171 (GRRLCVNDNNHPNHIAFEAIKPVEKDGKLVCRVCGGDLKTRPDD) form an LID region. R129 provides a ligand contact to ATP. AMP contacts are provided by R168 and R180. A213 serves as a coordination point for ATP.

This sequence belongs to the adenylate kinase family. As to quaternary structure, monomer.

It localises to the cytoplasm. It carries out the reaction AMP + ATP = 2 ADP. It functions in the pathway purine metabolism; AMP biosynthesis via salvage pathway; AMP from ADP: step 1/1. In terms of biological role, catalyzes the reversible transfer of the terminal phosphate group between ATP and AMP. Plays an important role in cellular energy homeostasis and in adenine nucleotide metabolism. The polypeptide is Adenylate kinase (Desulfotalea psychrophila (strain LSv54 / DSM 12343)).